Reading from the N-terminus, the 143-residue chain is D-aminoacyl-tRNA deacylase (143 aa).

The short motif at 135-136 (GP) is the Gly-cisPro motif, important for rejection of L-amino acids element.

Belongs to the DTD family. In terms of assembly, homodimer.

The protein resides in the cytoplasm. It catalyses the reaction glycyl-tRNA(Ala) + H2O = tRNA(Ala) + glycine + H(+). It carries out the reaction a D-aminoacyl-tRNA + H2O = a tRNA + a D-alpha-amino acid + H(+). An aminoacyl-tRNA editing enzyme that deacylates mischarged D-aminoacyl-tRNAs. Also deacylates mischarged glycyl-tRNA(Ala), protecting cells against glycine mischarging by AlaRS. Acts via tRNA-based rather than protein-based catalysis; rejects L-amino acids rather than detecting D-amino acids in the active site. By recycling D-aminoacyl-tRNA to D-amino acids and free tRNA molecules, this enzyme counteracts the toxicity associated with the formation of D-aminoacyl-tRNA entities in vivo and helps enforce protein L-homochirality. This Mycobacterium bovis (strain ATCC BAA-935 / AF2122/97) protein is D-aminoacyl-tRNA deacylase.